Consider the following 683-residue polypeptide: Transforming growth factor-beta-induced protein ig-h3 (683 aa).

The signal sequence occupies residues 1–23 (MALFVRLLALALALALGPAATLA). Serine 37 is subject to Phosphoserine. The EMI domain occupies 45 to 99 (GPNVCAVQKVIGTNRKYFTNCKQWYQRKICGKSTVISYECCPGYEKVPGERSCPA). 5 disulfides stabilise this stretch: cysteine 49/cysteine 85, cysteine 74/cysteine 339, cysteine 84/cysteine 97, cysteine 214/cysteine 317, and cysteine 473/cysteine 478. An S-cysteinyl cysteine modification is found at cysteine 65. 4 consecutive FAS1 domains span residues 103 to 236 (LANL…DKVI), 240 to 371 (TNNI…DELL), 375 to 498 (SAKT…DRML), and 502 to 632 (SGTV…TSVL). Positions 642–644 (RGD) match the Cell attachment site motif.

Binds to type I, II, and IV collagens. Post-translationally, gamma-carboxylation is controversial. Gamma-carboxyglutamated; gamma-carboxyglutamate residues are formed by vitamin K dependent carboxylation; this may be required for calcium binding. According to a more recent report, does not contain vitamin K-dependent gamma-carboxyglutamate residues. In terms of processing, the EMI domain contains 2 expected intradomain disulfide bridges (Cys-49-Cys85 and Cys-84-Cys-97) and one unusual interdomain disulfide bridge to the second FAS1 domain (Cys-74-Cys-339). This arrangement violates the predicted disulfide bridge pattern of an EMI domain. As to expression, located primarily in the epithelium of normal adult cornea, in fetal stromal cells, and both endothelium- and stroma-derived cells in healing corneal wounds. Not expressed in normal adult endothelium and stroma.

It is found in the secreted. It localises to the extracellular space. Its subcellular location is the extracellular matrix. Functionally, plays a role in cell adhesion. May play a role in cell-collagen interactions. The chain is Transforming growth factor-beta-induced protein ig-h3 (TGFBI) from Oryctolagus cuniculus (Rabbit).